The primary structure comprises 226 residues: NEDD8-specific protease 1 (226 aa).

It belongs to the peptidase C48 family.

Processes the pre-form of the ubiquitin-like protein NEDD8/RUB1. Has the capacity to discriminate between NEDD8/RUB1 and ubiquitin. Has no SUMO protease activity. The protein is NEDD8-specific protease 1 (NEDP1) of Arabidopsis thaliana (Mouse-ear cress).